Consider the following 236-residue polypeptide: Small ribosomal subunit protein uS2c (236 aa).

The protein belongs to the universal ribosomal protein uS2 family.

Its subcellular location is the plastid. It is found in the chloroplast. This Carica papaya (Papaya) protein is Small ribosomal subunit protein uS2c (rps2).